The primary structure comprises 135 residues: D-ribose pyranase (135 aa).

The active-site Proton donor is H20. Residues D28, H102, and 124 to 126 each bind substrate; that span reads YSN.

The protein belongs to the RbsD / FucU family. RbsD subfamily. In terms of assembly, homodecamer.

It localises to the cytoplasm. The enzyme catalyses beta-D-ribopyranose = beta-D-ribofuranose. It functions in the pathway carbohydrate metabolism; D-ribose degradation; D-ribose 5-phosphate from beta-D-ribopyranose: step 1/2. In terms of biological role, catalyzes the interconversion of beta-pyran and beta-furan forms of D-ribose. The polypeptide is D-ribose pyranase (Thermotoga petrophila (strain ATCC BAA-488 / DSM 13995 / JCM 10881 / RKU-1)).